We begin with the raw amino-acid sequence, 20 residues long: Unknown protein NF015 from 2D-PAGE (20 aa).

The disordered stretch occupies residues 1–20 (TPQIQKPAPQFSKTALLPDE).

This chain is Unknown protein NF015 from 2D-PAGE, found in Naegleria fowleri (Brain eating amoeba).